Reading from the N-terminus, the 268-residue chain is MNSNYLLLPHFDPSIFTLGDSNIGLRWYGLMYLLGFVFARWLAVRRANRPNSGWTVDQVDTLLFNGFMGVFIGGRVGDVFFYNLDHFLQEPLYLFRVWEGGMSFHGGLIGVIVAMIWTSYSQKRNFWQTADFVAPLIPFGLGLGRIGNFINLELWGRETNVPWAMIFPNDPLLLPRHPSQLYEAFLEGLVLFAILNIFIKKPRPMASVAGLFLIGYGVFRFIVEYVREPEVENFFGIITRGQALCLPMIIGGAFIMAWAYSRKSAVIK.

A run of 7 helical transmembrane segments spans residues 23–43 (IGLR…RWLA), 62–82 (LLFN…VFFY), 97–117 (VWEG…AMIW), 132–152 (FVAP…FINL), 179–199 (SQLY…NIFI), 206–226 (ASVA…VEYV), and 241–261 (GQAL…WAYS). Arg145 lines the a 1,2-diacyl-sn-glycero-3-phospho-(1'-sn-glycerol) pocket.

This sequence belongs to the Lgt family.

It is found in the cell inner membrane. The enzyme catalyses L-cysteinyl-[prolipoprotein] + a 1,2-diacyl-sn-glycero-3-phospho-(1'-sn-glycerol) = an S-1,2-diacyl-sn-glyceryl-L-cysteinyl-[prolipoprotein] + sn-glycerol 1-phosphate + H(+). The protein operates within protein modification; lipoprotein biosynthesis (diacylglyceryl transfer). Its function is as follows. Catalyzes the transfer of the diacylglyceryl group from phosphatidylglycerol to the sulfhydryl group of the N-terminal cysteine of a prolipoprotein, the first step in the formation of mature lipoproteins. This Haemophilus influenzae (strain 86-028NP) protein is Phosphatidylglycerol--prolipoprotein diacylglyceryl transferase.